The chain runs to 528 residues: Neuronal acetylcholine receptor subunit alpha-2 (528 aa).

The N-terminal stretch at 1-23 (MGWPCRSIIPLLVWCFVTLQAAT) is a signal peptide. Residues 24–239 (REQKQPHGFA…ITFYFVIRRL (216 aa)) lie on the Extracellular side of the membrane. Asn-54 and Asn-104 each carry an N-linked (GlcNAc...) asparagine glycan. 2 disulfide bridges follow: Cys-158-Cys-172 and Cys-222-Cys-223. 3 consecutive transmembrane segments (helical) span residues 240–264 (PLFY…VFYL), 272–290 (ITLC…LLIT), and 306–327 (YLLF…VLNV). The Cytoplasmic segment spans residues 328-501 (HHRSPSTHTM…WKYVAMVIDR (174 aa)). Over residues 390 to 410 (DDKWEEEEEEEEEEEEEEEEE) the composition is skewed to acidic residues. The tract at residues 390–427 (DDKWEEEEEEEEEEEEEEEEEKAYPSRVPSGGSQGTQC) is disordered. The helical transmembrane segment at 502–520 (IFLWMFIIVCLLGTVGLFL) threads the bilayer.

This sequence belongs to the ligand-gated ion channel (TC 1.A.9) family. Acetylcholine receptor (TC 1.A.9.1) subfamily. Alpha-2/CHRNA2 sub-subfamily. Neuronal AChR is composed of two different types of subunits: alpha and non-alpha (beta). CHRNA2/alpha-2 subunit can be combined to CHRNB2/beta-2 or CHRNB4/beta-4 to give rise to functional receptors. Both CHRNA2:CHRNB2 and CHRNA2:CHRNB4 nAChR complexes are heteropentamers with two subtypes: LS (low agonist sensitivity) with a (CHRNA2)3:(CHRNB2/4)2 and HS (high agonist sensitivity) with a (CHRNA2)2:(CHRNB2/4)3 stoichiometries; the subtypes differ in their subunit binding interfaces which are involved in ligand binding.

Its subcellular location is the synaptic cell membrane. It localises to the cell membrane. The catalysed reaction is Ca(2+)(in) = Ca(2+)(out). The enzyme catalyses K(+)(in) = K(+)(out). It carries out the reaction Na(+)(in) = Na(+)(out). Its function is as follows. Component of neuronal acetylcholine receptors (nAChRs) that function as pentameric, ligand-gated cation channels with high calcium permeability among other activities. nAChRs are excitatory neurotrasnmitter receptors formed by a collection of nAChR subunits known to mediate synaptic transmission in the nervous system and the neuromuscular junction. Each nAchR subunit confers differential attributes to channel properties, including activation, deactivation and desensitization kinetics, pH sensitivity, cation permeability, and binding to allosteric modulators. CHRNA2 forms heteropentameric neuronal acetylcholine receptors with CHRNB2 and CHRNB4 and plays a role in nicotine dependence. This chain is Neuronal acetylcholine receptor subunit alpha-2 (CHRNA2), found in Gallus gallus (Chicken).